A 220-amino-acid polypeptide reads, in one-letter code: Ribonuclease P protein subunit p29 (220 aa).

Ser10 is modified (phosphoserine).

It belongs to the eukaryotic/archaeal RNase P protein component 1 family. In terms of assembly, component of nuclear RNase P and RNase MRP ribonucleoproteins. RNase P consists of a catalytic RNA moiety and 10 different protein chains; POP1, POP4, POP5, POP7, RPP14, RPP21, RPP25, RPP30, RPP38 and RPP40. Within the RNase P complex, POP1, POP7 and RPP25 form the 'finger' subcomplex, POP5, RPP14, RPP40 and homodimeric RPP30 form the 'palm' subcomplex, and RPP21, POP4 and RPP38 form the 'wrist' subcomplex. All subunits of the RNase P complex interact with the catalytic RNA. Several subunits of RNase P are also part of the RNase MRP complex. RNase MRP consists of a catalytic RNA moiety and about 8 protein subunits; POP1, POP7, RPP25, RPP30, RPP38, RPP40 and possibly also POP4 and POP5.

The protein localises to the nucleus. It is found in the nucleolus. Its function is as follows. Component of ribonuclease P, a ribonucleoprotein complex that generates mature tRNA molecules by cleaving their 5'-ends. The polypeptide is Ribonuclease P protein subunit p29 (POP4) (Homo sapiens (Human)).